The primary structure comprises 336 residues: Dihydroorotate dehydrogenase (quinone) (336 aa).

Residues 62-66 and T86 contribute to the FMN site; that span reads AGLDK. K66 lines the substrate pocket. Residue 111-115 participates in substrate binding; it reads NRMGF. FMN is bound by residues N139 and N172. Residue N172 participates in substrate binding. S175 (nucleophile) is an active-site residue. A substrate-binding site is contributed by N177. Residues K217 and T245 each contribute to the FMN site. 246–247 serves as a coordination point for substrate; it reads NT. FMN-binding positions include G268, G297, and 318-319; that span reads YS.

Belongs to the dihydroorotate dehydrogenase family. Type 2 subfamily. Monomer. FMN serves as cofactor.

The protein localises to the cell membrane. It catalyses the reaction (S)-dihydroorotate + a quinone = orotate + a quinol. It participates in pyrimidine metabolism; UMP biosynthesis via de novo pathway; orotate from (S)-dihydroorotate (quinone route): step 1/1. Its function is as follows. Catalyzes the conversion of dihydroorotate to orotate with quinone as electron acceptor. This chain is Dihydroorotate dehydrogenase (quinone), found in Pectobacterium carotovorum subsp. carotovorum (strain PC1).